The sequence spans 592 residues: Putative phosphatidylinositol 4-kinase alpha-like protein P2 (592 aa).

The pleckstrin homology (PH) domain conferring phosphoinositide binding specificity stretch occupies residues 180–318 (EQLVEENTGS…ISWQAAIFKL (139 aa)). The PI3K/PI4K catalytic domain occupies 275–576 (KVKRCGVSEL…VIQSCFLSNR (302 aa)). A G-loop region spans residues 281-287 (VSELEKE). The segment at 441-449 (QIKDRHNGN) is catalytic loop. The segment at 460–484 (HIDFGFMFESSPGGNLGWEPDIKLT) is activation loop.

This sequence belongs to the PI3/PI4-kinase family. Type III PI4K subfamily.

In Homo sapiens (Human), this protein is Putative phosphatidylinositol 4-kinase alpha-like protein P2 (PI4KAP2).